A 901-amino-acid polypeptide reads, in one-letter code: Envelope glycoprotein B (901 aa).

An N-terminal signal peptide occupies residues 1–34 (MRPVRGIARSRILSCSWRGTWTSALTILYLGVYC). At 35 to 736 (ESTTVTPTTV…GALVTFVTNP (702 aa)) the chain is on the virion surface side. 3 N-linked (GlcNAc...) asparagine; by host glycosylation sites follow: Asn53, Asn60, and Asn66. 4 cysteine pairs are disulfide-bonded: Cys84–Cys533, Cys101–Cys489, Cys174–Cys239, and Cys331–Cys380. The interval 141–147 (SYKYVTY) is involved in fusion and/or binding to host membrane. A glycan (N-linked (GlcNAc...) asparagine; by host) is linked at Asn197. The segment at 226-233 (GSVWLYKE) is involved in fusion and/or binding to host membrane. Residues Asn270, Asn289, Asn328, Asn372, Asn398, Asn406, Asn436, Asn537, Asn571, and Asn623 are each glycosylated (N-linked (GlcNAc...) asparagine; by host). Cys559 and Cys596 are disulfide-bonded. Hydrophobic membrane proximal region regions lie at residues 683-734 (VERV…TFVT) and 714-734 (AVGA…TFVT). Residues 737 to 757 (FGAFVVFLFCVGCITLVITVY) form a helical membrane-spanning segment. At 758 to 901 (RRQRRAMQRP…KLNTEDDVHV (144 aa)) the chain is on the intravirion side. 2 disordered regions span residues 794–813 (GPEG…APYG) and 852–901 (DDKK…DVHV). Basic and acidic residues-rich tracts occupy residues 852–864 (DDKK…KSSK) and 872–883 (SETRRRPGIMDR). An Internalization motif motif is present at residues 890–893 (YQKL).

The protein belongs to the herpesviridae glycoprotein B family. Homotrimer; disulfide-linked. Binds to heparan sulfate proteoglycans. Interacts with gH/gL heterodimer. Post-translationally, a proteolytic cleavage by host furin generates two subunits that remain linked by disulfide bonds.

The protein localises to the virion membrane. Its subcellular location is the host cell membrane. It is found in the host endosome membrane. It localises to the host Golgi apparatus membrane. Its function is as follows. Envelope glycoprotein that forms spikes at the surface of virion envelope. Essential for the initial attachment to heparan sulfate moieties of the host cell surface proteoglycans. Involved in fusion of viral and cellular membranes leading to virus entry into the host cell. Following initial binding to its host receptors, membrane fusion is mediated by the fusion machinery composed at least of gB and the heterodimer gH/gL. May be involved in the fusion between the virion envelope and the outer nuclear membrane during virion egress. This Guinea pig cytomegalovirus (strain 22122) (GPCMV) protein is Envelope glycoprotein B.